The primary structure comprises 447 residues: Putative FBD-associated F-box protein At1g61330 (447 aa).

The region spanning K10 to I57 is the F-box domain. The FBD domain occupies V384–M416.

This chain is Putative FBD-associated F-box protein At1g61330, found in Arabidopsis thaliana (Mouse-ear cress).